The primary structure comprises 332 residues: Ketol-acid reductoisomerase (NADP(+)) (332 aa).

Residues 1 to 182 (MAQTWKDTDI…GSARAGLIKT (182 aa)) form the KARI N-terminal Rossmann domain. NADP(+)-binding positions include 25–28 (YGIQ), lysine 48, serine 53, and 83–86 (DMIQ). Histidine 108 is a catalytic residue. Glycine 134 contributes to the NADP(+) binding site. One can recognise a KARI C-terminal knotted domain in the interval 183–329 (AFKEEVETDW…KEMRKMMWPD (147 aa)). Residues aspartate 191, glutamate 195, glutamate 227, and glutamate 231 each contribute to the Mg(2+) site. Serine 252 contributes to the substrate binding site.

The protein belongs to the ketol-acid reductoisomerase family. Mg(2+) is required as a cofactor.

It carries out the reaction (2R)-2,3-dihydroxy-3-methylbutanoate + NADP(+) = (2S)-2-acetolactate + NADPH + H(+). The catalysed reaction is (2R,3R)-2,3-dihydroxy-3-methylpentanoate + NADP(+) = (S)-2-ethyl-2-hydroxy-3-oxobutanoate + NADPH + H(+). The protein operates within amino-acid biosynthesis; L-isoleucine biosynthesis; L-isoleucine from 2-oxobutanoate: step 2/4. Its pathway is amino-acid biosynthesis; L-valine biosynthesis; L-valine from pyruvate: step 2/4. Functionally, involved in the biosynthesis of branched-chain amino acids (BCAA). Catalyzes an alkyl-migration followed by a ketol-acid reduction of (S)-2-acetolactate (S2AL) to yield (R)-2,3-dihydroxy-isovalerate. In the isomerase reaction, S2AL is rearranged via a Mg-dependent methyl migration to produce 3-hydroxy-3-methyl-2-ketobutyrate (HMKB). In the reductase reaction, this 2-ketoacid undergoes a metal-dependent reduction by NADPH to yield (R)-2,3-dihydroxy-isovalerate. In Nitrosopumilus maritimus (strain SCM1), this protein is Ketol-acid reductoisomerase (NADP(+)).